Reading from the N-terminus, the 180-residue chain is Large ribosomal subunit protein uL5 (180 aa).

It belongs to the universal ribosomal protein uL5 family. In terms of assembly, part of the 50S ribosomal subunit; part of the 5S rRNA/L5/L18/L25 subcomplex. Contacts the 5S rRNA and the P site tRNA. Forms a bridge to the 30S subunit in the 70S ribosome.

This is one of the proteins that bind and probably mediate the attachment of the 5S RNA into the large ribosomal subunit, where it forms part of the central protuberance. In the 70S ribosome it contacts protein S13 of the 30S subunit (bridge B1b), connecting the 2 subunits; this bridge is implicated in subunit movement. Contacts the P site tRNA; the 5S rRNA and some of its associated proteins might help stabilize positioning of ribosome-bound tRNAs. The polypeptide is Large ribosomal subunit protein uL5 (Mycoplasma capricolum subsp. capricolum (strain California kid / ATCC 27343 / NCTC 10154)).